The following is a 449-amino-acid chain: Bifunctional protein GlmU (449 aa).

The tract at residues 1–229 (MKLSAVILAA…EEDIYGINDR (229 aa)) is pyrophosphorylase. UDP-N-acetyl-alpha-D-glucosamine-binding positions include 8-11 (LAAG), lysine 22, glutamine 73, and 78-79 (GT). Residue aspartate 102 coordinates Mg(2+). The UDP-N-acetyl-alpha-D-glucosamine site is built by glycine 139, glutamate 154, asparagine 169, and asparagine 227. Mg(2+) is bound at residue asparagine 227. Residues 230–250 (VQLAQAENILRQRKNRELMLS) form a linker region. An N-acetyltransferase region spans residues 251 to 449 (GVSLMDPAST…AGQKHLPRKG (199 aa)). UDP-N-acetyl-alpha-D-glucosamine contacts are provided by arginine 332 and lysine 350. The Proton acceptor role is filled by histidine 362. Tyrosine 365 and asparagine 376 together coordinate UDP-N-acetyl-alpha-D-glucosamine. Acetyl-CoA-binding positions include alanine 379, 385 to 386 (NY), serine 404, alanine 422, and arginine 439.

In the N-terminal section; belongs to the N-acetylglucosamine-1-phosphate uridyltransferase family. It in the C-terminal section; belongs to the transferase hexapeptide repeat family. Homotrimer. It depends on Mg(2+) as a cofactor.

Its subcellular location is the cytoplasm. It catalyses the reaction alpha-D-glucosamine 1-phosphate + acetyl-CoA = N-acetyl-alpha-D-glucosamine 1-phosphate + CoA + H(+). The enzyme catalyses N-acetyl-alpha-D-glucosamine 1-phosphate + UTP + H(+) = UDP-N-acetyl-alpha-D-glucosamine + diphosphate. The protein operates within nucleotide-sugar biosynthesis; UDP-N-acetyl-alpha-D-glucosamine biosynthesis; N-acetyl-alpha-D-glucosamine 1-phosphate from alpha-D-glucosamine 6-phosphate (route II): step 2/2. It participates in nucleotide-sugar biosynthesis; UDP-N-acetyl-alpha-D-glucosamine biosynthesis; UDP-N-acetyl-alpha-D-glucosamine from N-acetyl-alpha-D-glucosamine 1-phosphate: step 1/1. It functions in the pathway bacterial outer membrane biogenesis; LPS lipid A biosynthesis. In terms of biological role, catalyzes the last two sequential reactions in the de novo biosynthetic pathway for UDP-N-acetylglucosamine (UDP-GlcNAc). The C-terminal domain catalyzes the transfer of acetyl group from acetyl coenzyme A to glucosamine-1-phosphate (GlcN-1-P) to produce N-acetylglucosamine-1-phosphate (GlcNAc-1-P), which is converted into UDP-GlcNAc by the transfer of uridine 5-monophosphate (from uridine 5-triphosphate), a reaction catalyzed by the N-terminal domain. The sequence is that of Bifunctional protein GlmU from Syntrophomonas wolfei subsp. wolfei (strain DSM 2245B / Goettingen).